We begin with the raw amino-acid sequence, 57 residues long: Small ribosomal subunit protein eS27 (57 aa).

Zn(2+) is bound by residues C10, C13, C29, and C32. The C4-type zinc-finger motif lies at 10 to 32 (CGDCENEQVVFGKASSVVSCAVC).

This sequence belongs to the eukaryotic ribosomal protein eS27 family. As to quaternary structure, part of the 30S ribosomal subunit. Zn(2+) is required as a cofactor.

The polypeptide is Small ribosomal subunit protein eS27 (Halorubrum lacusprofundi (strain ATCC 49239 / DSM 5036 / JCM 8891 / ACAM 34)).